The sequence spans 576 residues: Lipoprotein LpqB (576 aa).

A signal peptide spans 1-16 (MRRVTRTIAAAGAAIA). Residue Cys17 is the site of N-palmitoyl cysteine attachment. Residue Cys17 is the site of S-diacylglycerol cysteine attachment.

The protein belongs to the LpqB lipoprotein family.

It localises to the cell membrane. This is Lipoprotein LpqB from Bifidobacterium longum (strain NCC 2705).